The sequence spans 190 residues: Imidazoleglycerol-phosphate dehydratase (190 aa).

This sequence belongs to the imidazoleglycerol-phosphate dehydratase family.

Its subcellular location is the cytoplasm. It carries out the reaction D-erythro-1-(imidazol-4-yl)glycerol 3-phosphate = 3-(imidazol-4-yl)-2-oxopropyl phosphate + H2O. The protein operates within amino-acid biosynthesis; L-histidine biosynthesis; L-histidine from 5-phospho-alpha-D-ribose 1-diphosphate: step 6/9. The chain is Imidazoleglycerol-phosphate dehydratase from Wolinella succinogenes (strain ATCC 29543 / DSM 1740 / CCUG 13145 / JCM 31913 / LMG 7466 / NCTC 11488 / FDC 602W) (Vibrio succinogenes).